A 182-amino-acid polypeptide reads, in one-letter code: Large ribosomal subunit protein uL5 (182 aa).

This sequence belongs to the universal ribosomal protein uL5 family. In terms of assembly, part of the 50S ribosomal subunit; part of the 5S rRNA/L5/L18/L25 subcomplex. Contacts the 5S rRNA and the P site tRNA. Forms a bridge to the 30S subunit in the 70S ribosome.

Its function is as follows. This is one of the proteins that bind and probably mediate the attachment of the 5S RNA into the large ribosomal subunit, where it forms part of the central protuberance. In the 70S ribosome it contacts protein S13 of the 30S subunit (bridge B1b), connecting the 2 subunits; this bridge is implicated in subunit movement. Contacts the P site tRNA; the 5S rRNA and some of its associated proteins might help stabilize positioning of ribosome-bound tRNAs. This is Large ribosomal subunit protein uL5 from Nostoc sp. (strain PCC 7120 / SAG 25.82 / UTEX 2576).